A 65-amino-acid polypeptide reads, in one-letter code: Large ribosomal subunit protein bL35 (65 aa).

Belongs to the bacterial ribosomal protein bL35 family.

The chain is Large ribosomal subunit protein bL35 from Aromatoleum aromaticum (strain DSM 19018 / LMG 30748 / EbN1) (Azoarcus sp. (strain EbN1)).